The following is a 398-amino-acid chain: Histidinol-phosphate aminotransferase (398 aa).

A compositionally biased stretch (polar residues) spans 1–10 (MTGQRATPQP). Residues 1–30 (MTGQRATPQPTLDDLPLRDDLRGKSPYGAP) are disordered. Lys234 carries the post-translational modification N6-(pyridoxal phosphate)lysine.

Belongs to the class-II pyridoxal-phosphate-dependent aminotransferase family. Histidinol-phosphate aminotransferase subfamily. In terms of assembly, homodimer. It depends on pyridoxal 5'-phosphate as a cofactor.

It carries out the reaction L-histidinol phosphate + 2-oxoglutarate = 3-(imidazol-4-yl)-2-oxopropyl phosphate + L-glutamate. It functions in the pathway amino-acid biosynthesis; L-histidine biosynthesis; L-histidine from 5-phospho-alpha-D-ribose 1-diphosphate: step 7/9. This is Histidinol-phosphate aminotransferase from Mycolicibacterium paratuberculosis (strain ATCC BAA-968 / K-10) (Mycobacterium paratuberculosis).